A 448-amino-acid chain; its full sequence is Phosphoglucosamine mutase (448 aa).

S100 (phosphoserine intermediate) is an active-site residue. Residues S100, D240, D242, and D244 each coordinate Mg(2+). The residue at position 100 (S100) is a Phosphoserine.

This sequence belongs to the phosphohexose mutase family. It depends on Mg(2+) as a cofactor. Post-translationally, activated by phosphorylation.

The enzyme catalyses alpha-D-glucosamine 1-phosphate = D-glucosamine 6-phosphate. In terms of biological role, catalyzes the conversion of glucosamine-6-phosphate to glucosamine-1-phosphate. This is Phosphoglucosamine mutase from Clostridium tetani (strain Massachusetts / E88).